The sequence spans 441 residues: Deoxyguanosinetriphosphate triphosphohydrolase-like protein (441 aa).

The region spanning Arg-59–Ala-250 is the HD domain.

This sequence belongs to the dGTPase family. Type 2 subfamily.

The sequence is that of Deoxyguanosinetriphosphate triphosphohydrolase-like protein from Shewanella loihica (strain ATCC BAA-1088 / PV-4).